The primary structure comprises 313 residues: Small ribosomal subunit protein uS2 (313 aa).

The tract at residues 281 to 301 is disordered; that stretch reads AAPAAPAVEPAPEAAQEATAE.

It belongs to the universal ribosomal protein uS2 family.

This Caulobacter sp. (strain K31) protein is Small ribosomal subunit protein uS2.